Consider the following 638-residue polypeptide: Acetolactate synthase 1, chloroplastic (638 aa).

Residues 1–19 (MATAAAASTALTGATTAAP) show a composition bias toward low complexity. The interval 1-23 (MATAAAASTALTGATTAAPKARR) is disordered. A chloroplast-targeting transit peptide spans 1–39 (MATAAAASTALTGATTAAPKARRRAHLLATRRALAAPIR). Glutamate 112 lines the thiamine diphosphate pocket. Cysteines 132 and 278 form a disulfide. FAD contacts are provided by residues arginine 214, 320–341 (HGTVYANYAVDKADLLLALGVR), and 363–382 (DIDPAEIGKNKQPHVSICAD). Residues 455-535 (QHQMWAAQYY…VKVFVLNNQH (81 aa)) form a thiamine pyrophosphate binding region. Mg(2+) is bound by residues aspartate 506 and asparagine 533.

The protein belongs to the TPP enzyme family. The cofactor is Mg(2+). Thiamine diphosphate is required as a cofactor.

It localises to the plastid. It is found in the chloroplast. The catalysed reaction is 2 pyruvate + H(+) = (2S)-2-acetolactate + CO2. It functions in the pathway amino-acid biosynthesis; L-isoleucine biosynthesis; L-isoleucine from 2-oxobutanoate: step 1/4. It participates in amino-acid biosynthesis; L-valine biosynthesis; L-valine from pyruvate: step 1/4. The polypeptide is Acetolactate synthase 1, chloroplastic (ALS1) (Zea mays (Maize)).